Here is a 198-residue protein sequence, read N- to C-terminus: Probable nicotinate-nucleotide adenylyltransferase (198 aa).

It belongs to the NadD family.

It catalyses the reaction nicotinate beta-D-ribonucleotide + ATP + H(+) = deamido-NAD(+) + diphosphate. It participates in cofactor biosynthesis; NAD(+) biosynthesis; deamido-NAD(+) from nicotinate D-ribonucleotide: step 1/1. In terms of biological role, catalyzes the reversible adenylation of nicotinate mononucleotide (NaMN) to nicotinic acid adenine dinucleotide (NaAD). In Albidiferax ferrireducens (strain ATCC BAA-621 / DSM 15236 / T118) (Rhodoferax ferrireducens), this protein is Probable nicotinate-nucleotide adenylyltransferase.